We begin with the raw amino-acid sequence, 332 residues long: Malate dehydrogenase, cytoplasmic (332 aa).

NAD(+) contacts are provided by residues 16–17 (QI), aspartate 43, and glycine 90. Arginine 99 contacts oxaloacetate. Glutamine 113 and asparagine 132 together coordinate NAD(+). 4 residues coordinate oxaloacetate: asparagine 132, arginine 163, histidine 188, and serine 243. Residue histidine 188 is the Proton acceptor of the active site.

This sequence belongs to the LDH/MDH superfamily. MDH type 2 family. As to quaternary structure, homodimer.

It localises to the cytoplasm. The catalysed reaction is (S)-malate + NAD(+) = oxaloacetate + NADH + H(+). This is Malate dehydrogenase, cytoplasmic (CMDH) from Medicago sativa (Alfalfa).